Here is a 762-residue protein sequence, read N- to C-terminus: Putative cation exchanger YDL206W (762 aa).

The signal sequence occupies residues 1–26 (MHKPLRWLITIAFYVSNVILIGYSLS). The Extracellular portion of the chain corresponds to 27–30 (SNGS). The N-linked (GlcNAc...) asparagine glycan is linked to Asn28. Residues 31–51 (ISEFYLHSVVLIECFSLLGVV) form a helical membrane-spanning segment. The Cytoplasmic portion of the chain corresponds to 52–102 (TSDCLTPSLSYISSNIFHISDRVSGMTLLALGNALPDITSTYQSMKSGVTS). A helical transmembrane segment spans residues 103 to 123 (LAIGELFGGIFFLLTVVIGLM). The Extracellular segment spans residues 124–156 (GCVATIQFQHDKSIETYTEESFDQNLSYDRSNY). Asn148 carries an N-linked (GlcNAc...) asparagine glycan. The helical transmembrane segment at 157 to 177 (ILDVGIFTFMLLVSGTFLADG) threads the bilayer. A topological domain (cytoplasmic) is located at residue Arg178. A helical transmembrane segment spans residues 179 to 199 (LYFWECIVMVLTYCCCAVYLI). Residues 200–501 (KSYKYPCEIN…YNYLTDVSLE (302 aa)) lie on the Extracellular side of the membrane. Asn280 and Asn329 each carry an N-linked (GlcNAc...) asparagine glycan. The helical transmembrane segment at 502–522 (IGFFEFLSLLVTTPVSIILYL) threads the bilayer. Over 523–554 (SIPSEISQTDHDLPLSYLQNIQLIASPIILNQ) the chain is Cytoplasmic. A helical transmembrane segment spans residues 555–575 (LITNNFSFWLLILSLVIAILL). Residues 576–589 (YFKTRTIPNKFNSD) are Extracellular-facing. A helical transmembrane segment spans residues 590-610 (IIFTVAFLLSLACLSKAVHII). Residues 611 to 615 (VVTLT) lie on the Cytoplasmic side of the membrane. The chain crosses the membrane as a helical span at residues 616–636 (HWINVFNISETILGLTIFTWG). Over 637 to 650 (NSIGDLVSNITFVK) the chain is Extracellular. N-linked (GlcNAc...) asparagine glycosylation occurs at Asn645. The helical transmembrane segment at 651 to 671 (IGVLEIAIGACFGSPLLYFLF) threads the bilayer. Residues 672-709 (GVGFDGIMIMLGDKTGKIVSGRDSNILMHHIDFKVDKN) lie on the Cytoplasmic side of the membrane. A helical membrane pass occupies residues 710–730 (LINTGVGILIAFLIFTVLIPL). Residues 731–738 (NDWKIDKK) lie on the Extracellular side of the membrane. Residues 739–759 (ISIALLTLYIVVTCISVFLEV) traverse the membrane as a helical segment. Topologically, residues 760 to 762 (HQV) are cytoplasmic.

This sequence belongs to the Ca(2+):cation antiporter (CaCA) (TC 2.A.19) family.

Its subcellular location is the membrane. Its function is as follows. Putative cation exchanger. This is Putative cation exchanger YDL206W from Saccharomyces cerevisiae (strain ATCC 204508 / S288c) (Baker's yeast).